The primary structure comprises 601 residues: uncharacterized protein (601 aa).

It belongs to the chlamydial CPn_1016/CT_858/TC_0248 family.

This is an uncharacterized protein from Chlamydia muridarum (strain MoPn / Nigg).